The primary structure comprises 537 residues: Ribonuclease III domain-containing protein RNC1, chloroplastic (537 aa).

The N-terminal 51 residues, 1–51 (MELCSSSPSSSLLRICSSSAPEISFSSSISQFPSKTQSILTKSRFQNLRIC), are a transit peptide targeting the chloroplast. RNase III domains lie at 141–283 (LLEV…LCFG) and 415–515 (EHPR…TIYG).

Interacts with RNA. Part of large ribonucleo-protein particles that contain CAF1 and/or CAF2.

Its subcellular location is the plastid. The protein resides in the chloroplast. In terms of biological role, binds specific group II introns in chloroplasts and facilitates their splicing. Acts on both subgroup IIA and subgroup IIB introns. The substrates of the subgroup II also require the CRM domain proteins CAF1 or CAF2. Binds both single-stranded and double-stranded RNA non-specifically, but lacks endonuclease activity. Required for plastid ribosome biogenesis. The chain is Ribonuclease III domain-containing protein RNC1, chloroplastic from Arabidopsis thaliana (Mouse-ear cress).